The chain runs to 267 residues: Shikimate dehydrogenase (NADP(+)) (267 aa).

Shikimate-binding positions include 14–16 (SLS) and Thr-61. Lys-65 (proton acceptor) is an active-site residue. The shikimate site is built by Asn-86 and Asp-101. NADP(+)-binding positions include 126 to 130 (GAGGA), 150 to 155 (NRTHSK), and Leu-213. Tyr-215 is a binding site for shikimate. Gly-236 contributes to the NADP(+) binding site.

Belongs to the shikimate dehydrogenase family. Homodimer.

It carries out the reaction shikimate + NADP(+) = 3-dehydroshikimate + NADPH + H(+). The protein operates within metabolic intermediate biosynthesis; chorismate biosynthesis; chorismate from D-erythrose 4-phosphate and phosphoenolpyruvate: step 4/7. In terms of biological role, involved in the biosynthesis of the chorismate, which leads to the biosynthesis of aromatic amino acids. Catalyzes the reversible NADPH linked reduction of 3-dehydroshikimate (DHSA) to yield shikimate (SA). The polypeptide is Shikimate dehydrogenase (NADP(+)) (Vesicomyosocius okutanii subsp. Calyptogena okutanii (strain HA)).